Here is a 198-residue protein sequence, read N- to C-terminus: Succinate dehydrogenase [ubiquinone] cytochrome b subunit, mitochondrial (198 aa).

The N-terminal 50 residues, 1-50 (MSAMMVKLGLNKSALLLKPSAFSRAAALSSSRRLLFNTARTNFLSTSPLK), are a transit peptide targeting the mitochondrion. The Mitochondrial matrix segment spans residues 51-99 (NVASEMNTKAAIAEEQILNKQRAKRPISPHLTIYQPQLTWYLSSLHRIS). Residues Ser-93 and Arg-97 each contribute to the a ubiquinone site. The chain crosses the membrane as a helical span at residues 100–120 (LVLMGLGFYLFTILFGVSGLL). Residues 121–139 (GLGLTTEKVSNWYHQKFSK) are Mitochondrial intermembrane-facing. A helical transmembrane segment spans residues 140 to 160 (ITEWSIKGSFAYLFAIHYGGA). Residue His-156 participates in heme binding. At 161 to 175 (IRHLIWDTAKELTLK) the chain is on the mitochondrial matrix side. A helical transmembrane segment spans residues 176 to 196 (GVYRTGYALIGFTAVLGTYLL). The Mitochondrial intermembrane portion of the chain corresponds to 197 to 198 (TL).

This sequence belongs to the cytochrome b560 family. Forms part of complex II containing four subunits: a flavoprotein (FP), an iron-sulfur protein (IP) and a cytochrome b composed of two integral membrane proteins. Requires heme as cofactor.

Its subcellular location is the mitochondrion inner membrane. The protein operates within carbohydrate metabolism; tricarboxylic acid cycle. Its function is as follows. Membrane-anchoring mono-heme cytochrome b subunit of succinate dehydrogenase (SDH) that is involved in system II of the mitochondrial electron transport chain and is responsible for transferring electrons from succinate to ubiquinone (coenzyme Q). SDH3 and SDH4 form the membrane dimer that anchors the catalytic dimer formed by SDH1 and SDH2 to the matrix surface of the mitochondrial inner membrane. Electrons originating from the catalytic dimer enter the membrane dimer for ubiquinone reduction. The chain is Succinate dehydrogenase [ubiquinone] cytochrome b subunit, mitochondrial (SDH3) from Saccharomyces cerevisiae (strain ATCC 204508 / S288c) (Baker's yeast).